The following is a 414-amino-acid chain: Gamma-glutamyl phosphate reductase (414 aa).

This sequence belongs to the gamma-glutamyl phosphate reductase family.

It localises to the cytoplasm. The enzyme catalyses L-glutamate 5-semialdehyde + phosphate + NADP(+) = L-glutamyl 5-phosphate + NADPH + H(+). It functions in the pathway amino-acid biosynthesis; L-proline biosynthesis; L-glutamate 5-semialdehyde from L-glutamate: step 2/2. In terms of biological role, catalyzes the NADPH-dependent reduction of L-glutamate 5-phosphate into L-glutamate 5-semialdehyde and phosphate. The product spontaneously undergoes cyclization to form 1-pyrroline-5-carboxylate. The protein is Gamma-glutamyl phosphate reductase of Xanthomonas campestris pv. campestris (strain ATCC 33913 / DSM 3586 / NCPPB 528 / LMG 568 / P 25).